The sequence spans 455 residues: Argininosuccinate lyase (455 aa).

This sequence belongs to the lyase 1 family. Argininosuccinate lyase subfamily.

Its subcellular location is the cytoplasm. The catalysed reaction is 2-(N(omega)-L-arginino)succinate = fumarate + L-arginine. Its pathway is amino-acid biosynthesis; L-arginine biosynthesis; L-arginine from L-ornithine and carbamoyl phosphate: step 3/3. This is Argininosuccinate lyase from Shewanella baltica (strain OS155 / ATCC BAA-1091).